A 144-amino-acid chain; its full sequence is Ribosome-binding factor A (144 aa).

Positions 120-144 (DKRRMAESGREEDDAAPDETTEDNA) are disordered. The segment covering 129 to 144 (REEDDAAPDETTEDNA) has biased composition (acidic residues).

This sequence belongs to the RbfA family. Monomer. Binds 30S ribosomal subunits, but not 50S ribosomal subunits or 70S ribosomes.

Its subcellular location is the cytoplasm. Its function is as follows. One of several proteins that assist in the late maturation steps of the functional core of the 30S ribosomal subunit. Associates with free 30S ribosomal subunits (but not with 30S subunits that are part of 70S ribosomes or polysomes). Required for efficient processing of 16S rRNA. May interact with the 5'-terminal helix region of 16S rRNA. The polypeptide is Ribosome-binding factor A (Aeromonas hydrophila subsp. hydrophila (strain ATCC 7966 / DSM 30187 / BCRC 13018 / CCUG 14551 / JCM 1027 / KCTC 2358 / NCIMB 9240 / NCTC 8049)).